The chain runs to 125 residues: Holo-[acyl-carrier-protein] synthase (125 aa).

Positions 8 and 57 each coordinate Mg(2+).

It belongs to the P-Pant transferase superfamily. AcpS family. Mg(2+) serves as cofactor.

The protein localises to the cytoplasm. It catalyses the reaction apo-[ACP] + CoA = holo-[ACP] + adenosine 3',5'-bisphosphate + H(+). Functionally, transfers the 4'-phosphopantetheine moiety from coenzyme A to a Ser of acyl-carrier-protein. The protein is Holo-[acyl-carrier-protein] synthase of Nitrosospira multiformis (strain ATCC 25196 / NCIMB 11849 / C 71).